Consider the following 289-residue polypeptide: ATP synthase gamma chain (289 aa).

The protein belongs to the ATPase gamma chain family. In terms of assembly, F-type ATPases have 2 components, CF(1) - the catalytic core - and CF(0) - the membrane proton channel. CF(1) has five subunits: alpha(3), beta(3), gamma(1), delta(1), epsilon(1). CF(0) has three main subunits: a, b and c.

The protein resides in the cell inner membrane. Produces ATP from ADP in the presence of a proton gradient across the membrane. The gamma chain is believed to be important in regulating ATPase activity and the flow of protons through the CF(0) complex. This is ATP synthase gamma chain from Herminiimonas arsenicoxydans.